Reading from the N-terminus, the 78-residue chain is DNA-directed RNA polymerase subunit omega (78 aa).

This sequence belongs to the RNA polymerase subunit omega family. In terms of assembly, in cyanobacteria the RNAP catalytic core is composed of 2 alpha, 1 beta, 1 beta', 1 gamma and 1 omega subunit. When a sigma factor is associated with the core the holoenzyme is formed, which can initiate transcription.

The enzyme catalyses RNA(n) + a ribonucleoside 5'-triphosphate = RNA(n+1) + diphosphate. Functionally, promotes RNA polymerase assembly. Latches the N- and C-terminal regions of the beta' subunit thereby facilitating its interaction with the beta and alpha subunits. The chain is DNA-directed RNA polymerase subunit omega from Prochlorococcus marinus (strain MIT 9301).